Consider the following 339-residue polypeptide: MGRIVVLYVDGAFGIGKTTVLRQIQKSAAYRFRRIYLEEPMRAWRSWFVDDHDAIREIYTTQELKDAGEIDLREASRRVCYAQVSLSAPFHIMNAVIYGIISGESEATSAHLGEGDYFVGVDRHPLASCLCFPVARFVTGYLEYTDLIALVATLPDYPRGASIAILDLSVEEQARRITERSRSGEHVNKTFLRILRNVFIIMYNTVAYLRNVSIDKACADREALEDFRGSQLESDMHKIDIQPRDDPNASETLFAVMASDATWRKNRKQSALFVYTMAKLDALLRSLNMHIVDINGLSQEQCAEKVVAISSKVPAVTARGNAPDLLFDAVEAYNADMGV.

Position 11 to 18 (11 to 18 (GAFGIGKT)) interacts with ATP. Catalysis depends on E39, which acts as the Proton acceptor. Substrate-binding residues include Y59 and Q83. Residue R176 coordinates ATP. R182 contacts substrate.

It belongs to the herpesviridae thymidine kinase family. As to quaternary structure, homodimer.

It carries out the reaction thymidine + ATP = dTMP + ADP + H(+). Its function is as follows. Catalyzes the transfer of the gamma-phospho group of ATP to thymidine to generate dTMP in the salvage pathway of pyrimidine synthesis. The dTMP serves as a substrate for DNA polymerase during viral DNA replication. Allows the virus to be reactivated and to grow in non-proliferative cells lacking a high concentration of phosphorylated nucleic acid precursors. This Amazona oratrix (yellow-headed parrot) protein is Thymidine kinase.